Here is a 587-residue protein sequence, read N- to C-terminus: Glutamine--tRNA ligase (587 aa).

Residues 58–68 carry the 'HIGH' region motif; the sequence is PEPNGYLHIGH. ATP-binding positions include 59 to 61 and 65 to 71; these read EPN and HIGHAKS. Residues D91 and Y240 each coordinate L-glutamine. ATP contacts are provided by residues T259 and 294 to 295; that span reads RL. A 'KMSKS' region motif is present at residues 301-305; sequence VTSKR.

The protein belongs to the class-I aminoacyl-tRNA synthetase family. As to quaternary structure, monomer.

Its subcellular location is the cytoplasm. It carries out the reaction tRNA(Gln) + L-glutamine + ATP = L-glutaminyl-tRNA(Gln) + AMP + diphosphate. The polypeptide is Glutamine--tRNA ligase (Bordetella bronchiseptica (strain ATCC BAA-588 / NCTC 13252 / RB50) (Alcaligenes bronchisepticus)).